A 619-amino-acid chain; its full sequence is Mitogen-activated protein kinase kinase kinase 2 (619 aa).

The segment at Leu25–Arg45 is disordered. Ser26 bears the Phosphoserine mark. The PB1 domain occupies Asp43–Asn122. Phosphoserine is present on residues Ser153, Ser159, and Ser164. 3 disordered regions span residues Ile154–Glu173, Leu201–Ser248, and Arg289–Asn355. Low complexity predominate over residues Pro203 to Ser219. Ser239, Ser297, Ser311, Ser331, Ser344, and Ser349 each carry phosphoserine. Residues Thr290–Val299 are compositionally biased toward polar residues. A compositionally biased stretch (low complexity) spans Ser300–Ser315. Residues Asp322 to Asp332 are compositionally biased toward basic and acidic residues. The region spanning Arg357–His617 is the Protein kinase domain. Residues Leu362–Tyr371 and Lys385 contribute to the ATP site. Catalysis depends on Asp483, which acts as the Proton acceptor.

The protein belongs to the protein kinase superfamily. STE Ser/Thr protein kinase family. MAP kinase kinase kinase subfamily. As to quaternary structure, interacts with PKN2; the interaction activates PKN2 kinase activity in a MAP3K2-independent kinase activity. Self-associates. Binds both upstream activators and downstream substrates in multimolecular complexes. Interacts (via the kinase catalytic domain) with STK38. Interacts with XIAP/BIRC4. The cofactor is Mg(2+). In terms of processing, autophosphorylated. Post-translationally, ubiquitination by XIAP/BIRC4 does not lead to proteasomal degradation.

Its subcellular location is the cytoplasm. The protein localises to the nucleus. The catalysed reaction is L-seryl-[protein] + ATP = O-phospho-L-seryl-[protein] + ADP + H(+). It carries out the reaction L-threonyl-[protein] + ATP = O-phospho-L-threonyl-[protein] + ADP + H(+). Its activity is regulated as follows. Activated by phosphorylation on Thr-524. Component of a protein kinase signal transduction cascade. Regulates the JNK and ERK5 pathways by phosphorylating and activating MAP2K5 and MAP2K7. Plays a role in caveolae kiss-and-run dynamics. This Homo sapiens (Human) protein is Mitogen-activated protein kinase kinase kinase 2 (MAP3K2).